We begin with the raw amino-acid sequence, 977 residues long: DNA-directed RNA polymerase 3A, chloroplastic (977 aa).

Residues 1–72 constitute a chloroplast transit peptide; the sequence is MASTASYSPS…NNIQSQTTVC (72 aa). Catalysis depends on residues aspartate 678, lysine 753, and aspartate 910.

It belongs to the phage and mitochondrial RNA polymerase family.

The protein resides in the plastid. It is found in the chloroplast. It catalyses the reaction RNA(n) + a ribonucleoside 5'-triphosphate = RNA(n+1) + diphosphate. Its function is as follows. DNA-dependent RNA polymerase catalyzes the transcription of DNA into RNA using the four ribonucleoside triphosphates as substrates. This Nicotiana tabacum (Common tobacco) protein is DNA-directed RNA polymerase 3A, chloroplastic (RPOT3-SYL).